The sequence spans 206 residues: Tetrathionate response regulatory protein TtrR (206 aa).

The Response regulatory domain maps to 3 to 117 (TIHLLDDDTA…PLQAALERAL (115 aa)). Asp52 is subject to 4-aspartylphosphate. The HTH luxR-type domain maps to 134 to 194 (QQLTPKEREL…ELIRRFEKMA (61 aa)). The H-T-H motif DNA-binding region spans 153–172 (NREIAEAMNIAVRTVEVHRA).

In terms of processing, phosphorylated by TtrS.

It localises to the cytoplasm. Its function is as follows. Member of the two-component regulatory system TtrR/TtrS, which is required for synthesis of tetrathionate reductase. Positively regulates transcription of the ttrBCA operon. During mice infection, the ability to use tetrathionate as an electron acceptor is a growth advantage for S.typhimurium over the competing microbiota in the lumen of the inflamed gut. This Salmonella typhimurium (strain LT2 / SGSC1412 / ATCC 700720) protein is Tetrathionate response regulatory protein TtrR (ttrR).